The chain runs to 394 residues: Phosphopentomutase (394 aa).

6 residues coordinate Mn(2+): D14, D287, H292, D328, H329, and H340.

The protein belongs to the phosphopentomutase family. It depends on Mn(2+) as a cofactor.

It is found in the cytoplasm. The catalysed reaction is 2-deoxy-alpha-D-ribose 1-phosphate = 2-deoxy-D-ribose 5-phosphate. The enzyme catalyses alpha-D-ribose 1-phosphate = D-ribose 5-phosphate. It functions in the pathway carbohydrate degradation; 2-deoxy-D-ribose 1-phosphate degradation; D-glyceraldehyde 3-phosphate and acetaldehyde from 2-deoxy-alpha-D-ribose 1-phosphate: step 1/2. Its function is as follows. Isomerase that catalyzes the conversion of deoxy-ribose 1-phosphate (dRib-1-P) and ribose 1-phosphate (Rib-1-P) to deoxy-ribose 5-phosphate (dRib-5-P) and ribose 5-phosphate (Rib-5-P), respectively. The chain is Phosphopentomutase from Shouchella clausii (strain KSM-K16) (Alkalihalobacillus clausii).